Here is a 775-residue protein sequence, read N- to C-terminus: Phenylalanine--tRNA ligase beta subunit (775 aa).

In terms of domain architecture, tRNA-binding spans 39–147 (GIDLDGVVFG…EDFKPGTDAN (109 aa)). A B5 domain is found at 394–470 (YKPKKVFLPQ…RVKGYEHYTS (77 aa)). 4 residues coordinate Mg(2+): Asp-448, Asp-454, Glu-457, and Glu-458. The FDX-ACB domain maps to 681 to 774 (AKFPPVVRDI…LKEKYGVELR (94 aa)).

Belongs to the phenylalanyl-tRNA synthetase beta subunit family. Type 1 subfamily. As to quaternary structure, tetramer of two alpha and two beta subunits. Requires Mg(2+) as cofactor.

The protein localises to the cytoplasm. It carries out the reaction tRNA(Phe) + L-phenylalanine + ATP = L-phenylalanyl-tRNA(Phe) + AMP + diphosphate + H(+). The sequence is that of Phenylalanine--tRNA ligase beta subunit (pheT) from Aquifex aeolicus (strain VF5).